The chain runs to 779 residues: Membrane metallo-endopeptidase-like 1 (779 aa).

At 1–27 the chain is on the cytoplasmic side; that stretch reads MGKSEGPVGMVESAGRAGQKRPGFLEG. Residues 28 to 48 traverse the membrane as a helical; Signal-anchor for type II membrane protein segment; it reads GLLLLLLLVTAALVALGVLYA. The Lumenal segment spans residues 49-779; the sequence is DRRGKQLPRL…MHPKERCRVW (731 aa). The Peptidase M13 domain maps to 88-779; it reads VCTTPGCVIA…MHPKERCRVW (692 aa). 5 cysteine pairs are disulfide-bonded: Cys89–Cys94, Cys112–Cys764, Cys120–Cys724, Cys175–Cys439, and Cys650–Cys776. Arg135 contributes to the a peptide binding site. 4 N-linked (GlcNAc...) asparagine glycosylation sites follow: Asn177, Asn207, Asn350, and Asn530. The stretch at 515-560 forms a coiled coil; sequence LEEMNRRLDEEYSNLNFSEDLYFENSLQNLKVGAQRSLRKLREKVD. Residue His613 participates in Zn(2+) binding. Glu614 is an active-site residue. A Zn(2+)-binding site is contributed by His617. Asn657 carries N-linked (GlcNAc...) asparagine glycosylation. Glu676 provides a ligand contact to Zn(2+). Residue Asp680 is the Proton donor of the active site.

It belongs to the peptidase M13 family. Zn(2+) is required as a cofactor. Post-translationally, N-glycosylated. Predominantly expressed in testis. Weakly expressed in brain, kidney and heart.

It localises to the membrane. It is found in the secreted. The enzyme catalyses Preferential cleavage of polypeptides between hydrophobic residues, particularly with Phe or Tyr at P1'.. Its activity is regulated as follows. Inhibited by thiorphan and phosphoramidon. Metalloprotease involved in sperm function, possibly by modulating the processes of fertilization and early embryonic development. Degrades a broad variety of small peptides with a preference for peptides shorter than 3 kDa containing neutral bulky aliphatic or aromatic amino acid residues. Shares the same substrate specificity with MME and cleaves peptides at the same amide bond. The sequence is that of Membrane metallo-endopeptidase-like 1 (MMEL1) from Homo sapiens (Human).